Consider the following 274-residue polypeptide: MDSRMSDLQALRGFLGGSERLFVLTGAGCSTASGIPDYRDGQGQWKRKPPIDFQAFMGGQPARARYWARSMVGWRHFGQARPNAAHHALARLAQRGQVDLLVTQNVDRLHQAAGGREVLDLHGRLDEVRCMQCDWRGPRGPWQHTLELANPQWAALQAGAAPDGNADLEGQDFSRFVVPSCPRCGGIVKPDVVFFGETVPRERVQRAYAALEHADAVLVVGSSLMLYSGYRFVQAAARAGLPIAAINLGRTRADDMLALKVSRPCDEVLAEVVP.

The 274-residue stretch at 1-274 folds into the Deacetylase sirtuin-type domain; it reads MDSRMSDLQA…CDEVLAEVVP (274 aa). NAD(+)-binding positions include 26–46 and 104–107; these read GAGC…GQWK and QNVD. Residue His122 is the Proton acceptor of the active site. Residues Cys130, Cys133, Cys181, and Cys184 each contribute to the Zn(2+) site. NAD(+) contacts are provided by residues 221–223, 247–249, and Cys265; these read GSS and NLG.

The protein belongs to the sirtuin family. Class II subfamily. It depends on Zn(2+) as a cofactor.

It is found in the cytoplasm. The catalysed reaction is N(6)-acetyl-L-lysyl-[protein] + NAD(+) + H2O = 2''-O-acetyl-ADP-D-ribose + nicotinamide + L-lysyl-[protein]. Its function is as follows. NAD-dependent protein deacetylase which modulates the activities of several enzymes which are inactive in their acetylated form. This Bordetella pertussis (strain Tohama I / ATCC BAA-589 / NCTC 13251) protein is NAD-dependent protein deacetylase.